Here is a 54-residue protein sequence, read N- to C-terminus: Large ribosomal subunit protein bL33A (54 aa).

This sequence belongs to the bacterial ribosomal protein bL33 family.

In Mycolicibacterium paratuberculosis (strain ATCC BAA-968 / K-10) (Mycobacterium paratuberculosis), this protein is Large ribosomal subunit protein bL33A.